The following is a 162-amino-acid chain: Transcription antitermination protein NusB (162 aa).

It belongs to the NusB family.

In terms of biological role, involved in transcription antitermination. Required for transcription of ribosomal RNA (rRNA) genes. Binds specifically to the boxA antiterminator sequence of the ribosomal RNA (rrn) operons. In Mycobacterium sp. (strain JLS), this protein is Transcription antitermination protein NusB.